A 326-amino-acid chain; its full sequence is Aldo-keto reductase family 1 member D1 (326 aa).

NADP(+)-binding positions include 22–26 (GLGTY) and Asp-53. Substrate is bound at residue Tyr-26. Positions 58, 89, 120, and 132 each coordinate substrate. The active-site Proton donor is the Tyr-58. NADP(+) contacts are provided by residues 169-170 (SN), Gln-193, and 219-224 (YSPLGT). Trp-230 is a substrate binding site. 273–283 (KSFNPERIKEN) lines the NADP(+) pocket.

This sequence belongs to the aldo/keto reductase family.

The protein resides in the cytoplasm. It carries out the reaction 5beta-cholestan-3-one + NADP(+) = cholest-4-en-3-one + NADPH + H(+). The catalysed reaction is 4,5beta-dihydrocortisone + NADP(+) = cortisone + NADPH + H(+). The enzyme catalyses cortisol + NADPH + H(+) = 5beta-dihydrocortisol + NADP(+). It catalyses the reaction corticosterone + NADPH + H(+) = 5beta-dihydrocorticosterone + NADP(+). It carries out the reaction 7alpha,12alpha-dihydroxycholest-4-en-3-one + NADPH + H(+) = 7alpha,12alpha-dihydroxy-5beta-cholestan-3-one + NADP(+). The catalysed reaction is 7alpha-hydroxycholest-4-en-3-one + NADPH + H(+) = 7alpha-hydroxy-5beta-cholestan-3-one + NADP(+). The enzyme catalyses epitestosterone + NADPH + H(+) = 5beta-dihydroepitestosterone + NADP(+). It catalyses the reaction androst-4-ene-3,17-dione + NADPH + H(+) = 5beta-androstane-3,17-dione + NADP(+). It carries out the reaction progesterone + NADPH + H(+) = 5beta-pregnan-3,20-dione + NADP(+). The catalysed reaction is 21-hydroxyprogesterone + NADPH + H(+) = 5beta-dihydrodeoxycorticosterone + NADP(+). The enzyme catalyses aldosterone + NADPH + H(+) = 5beta-dihydroaldosterone + NADP(+). It catalyses the reaction 17beta-hydroxyandrosta-1,4-dien-3-one + NADPH + H(+) = 17beta-hydroxy-5beta-androst-1-en-3-one + NADP(+). It carries out the reaction 17beta-hydroxyestr-4-en-3-one + NADPH + H(+) = 17beta-hydroxy-5beta-estran-3-one + NADP(+). The catalysed reaction is 5beta-dihydrotestosterone + NADP(+) = testosterone + NADPH + H(+). The enzyme catalyses androst-4-ene-3,11,17-trione + NADPH + H(+) = 17beta-hydroxyandrost-4-ene-3,11-dione + NADP(+). Its activity is regulated as follows. Subject to inhibition by high substrate concentrations. Inhibited by testosterone concentrations above 10 uM. Inhibited by the primary and secondary bile acids chenodeoxycholic acid and ursodeoxycholic acid. Functionally, catalyzes the stereospecific NADPH-dependent reduction of the C4-C5 double bond of bile acid intermediates and steroid hormones carrying a delta(4)-3-one structure to yield an A/B cis-ring junction. This cis-configuration is crucial for bile acid biosynthesis and plays important roles in steroid metabolism. Capable of reducing a broad range of delta-(4)-3-ketosteroids from C18 (such as, 17beta-hydroxyestr-4-en-3-one) to C27 (such as, 7alpha-hydroxycholest-4-en-3-one). The sequence is that of Aldo-keto reductase family 1 member D1 (AKR1D1) from Oryctolagus cuniculus (Rabbit).